Reading from the N-terminus, the 442-residue chain is Protein phosphatase 2C 3 (442 aa).

A disordered region spans residues 30-100 (RFRMSPSEMN…VSISDGNSSV (71 aa)). A compositionally biased stretch (acidic residues) spans 79–90 (PEEESVSLEDSD). One can recognise a PPM-type phosphatase domain in the interval 120-433 (RYGVASVCGR…DNVSVVVIDL (314 aa)). Positions 162, 163, and 339 each coordinate Mn(2+). The segment at 363–401 (GRGRRRGETQTPGRRSEEEGKEEEEKVVGSRKNGKRGEI) is disordered. A compositionally biased stretch (basic and acidic residues) spans 376–390 (RRSEEEGKEEEEKVV). Residue D424 participates in Mn(2+) binding.

Belongs to the PP2C family. In terms of assembly, part of a K(+)-channel calcium-sensing kinase/phosphatase complex composed by a calcium sensor CBL (CBL1, CBL2, CBL3 or CBL9), a kinase CIPK (CIPK6, CIPK16 or CIPK23), a phosphatase PP2C (AIP1) and a K(+)-channel (AKT1). Interacts with AKT1 and CIPK23. Interacts with PYL8/RCAR3 in an abscisic acid-independent. Interacts with PYR1/RCAR11 in an abscisic acid-dependent manner. Mg(2+) is required as a cofactor. Requires Mn(2+) as cofactor. As to expression, expressed in shoot meristem, vascular tissues of cotyledons, and in primary roots surrounding the root meristem. Highly expressed in seeds.

It is found in the cell membrane. Its subcellular location is the cytoplasm. The protein localises to the nucleus. The catalysed reaction is O-phospho-L-seryl-[protein] + H2O = L-seryl-[protein] + phosphate. It catalyses the reaction O-phospho-L-threonyl-[protein] + H2O = L-threonyl-[protein] + phosphate. Its function is as follows. Involved in the negative regulation of the K(+) potassium channel AKT1 by its dephosphorylation, antagonistically to CIPK proteins (e.g. CIPK23). Functions as a positive regulator of abscisic acid-mediated cell signaling during seedling growth. Involved in the regulation of seed dormancy. Acts as a negative regulator of seed dormancy by inhibiting abscisic signaling and subsequently activating gibberellic acid signaling. The polypeptide is Protein phosphatase 2C 3 (Arabidopsis thaliana (Mouse-ear cress)).